The chain runs to 181 residues: SecB-like chaperone MT2006 (181 aa).

Belongs to the SecB-like family. Homotetramer, interacts with antitoxin HigA1.

Its function is as follows. Chaperone component of an atypical, type II toxin-antitoxin chaperone (TAC) module, probably required for antitoxin HigA1 to neutralize its cognate toxin HigB1. This chain is SecB-like chaperone MT2006 (secBL), found in Mycobacterium tuberculosis (strain CDC 1551 / Oshkosh).